The sequence spans 1136 residues: Protein stu-1 (1136 aa).

HEAT repeat units follow at residues 95 to 133 (TLPVVVDKLGDQKDKFRQIAVQALTTLYKVAPVDVERSV) and 167 to 205 (YVPTLMELLEDADGSVRDVAKTTVIELFKNAPNTAKSDL). Disordered stretches follow at residues 524–554 (KDPHNPNAHSRTETGGARPGMGLSKSVMGAP), 567–794 (RAMA…QPQI), and 821–884 (TAGQ…LLDS). Residues 595-622 (VSSTSQASVASASTASAVPAPTKSAFGA) are compositionally biased toward low complexity. Residues 659–668 (PAEPASPPSK) are compositionally biased toward pro residues. Residues 673 to 683 (TVTSPKTQTLV) are compositionally biased toward polar residues. Low complexity predominate over residues 701–716 (SSESGIPIPVSGISSP). 2 stretches are compositionally biased toward polar residues: residues 777 to 793 (LPTQKTPSPTEESQQPQ) and 822 to 833 (AGQTQPQSTYTS).

This sequence belongs to the CLASP family. In terms of assembly, interacts with microtubules.

It localises to the nucleus. Its subcellular location is the cytoplasm. It is found in the cytoskeleton. The protein resides in the spindle. Functionally, microtubule binding protein that promotes the stabilization of dynamic microtubules. Required for mitotic spindle formation. This is Protein stu-1 (stu-1) from Neurospora crassa (strain ATCC 24698 / 74-OR23-1A / CBS 708.71 / DSM 1257 / FGSC 987).